A 370-amino-acid polypeptide reads, in one-letter code: Queuine tRNA-ribosyltransferase (370 aa).

Asp-93 acts as the Proton acceptor in catalysis. Substrate-binding positions include Asp-93–Phe-97, Asp-147, Gln-189, and Gly-216. The segment at Gly-247–Cys-253 is RNA binding. Asp-266 serves as the catalytic Nucleophile. Positions Thr-271 to Arg-275 are RNA binding; important for wobble base 34 recognition. Residues Cys-304, Cys-306, Cys-309, and His-335 each contribute to the Zn(2+) site.

Belongs to the queuine tRNA-ribosyltransferase family. As to quaternary structure, homodimer. Within each dimer, one monomer is responsible for RNA recognition and catalysis, while the other monomer binds to the replacement base PreQ1. The cofactor is Zn(2+).

It catalyses the reaction 7-aminomethyl-7-carbaguanine + guanosine(34) in tRNA = 7-aminomethyl-7-carbaguanosine(34) in tRNA + guanine. The protein operates within tRNA modification; tRNA-queuosine biosynthesis. In terms of biological role, catalyzes the base-exchange of a guanine (G) residue with the queuine precursor 7-aminomethyl-7-deazaguanine (PreQ1) at position 34 (anticodon wobble position) in tRNAs with GU(N) anticodons (tRNA-Asp, -Asn, -His and -Tyr). Catalysis occurs through a double-displacement mechanism. The nucleophile active site attacks the C1' of nucleotide 34 to detach the guanine base from the RNA, forming a covalent enzyme-RNA intermediate. The proton acceptor active site deprotonates the incoming PreQ1, allowing a nucleophilic attack on the C1' of the ribose to form the product. After dissociation, two additional enzymatic reactions on the tRNA convert PreQ1 to queuine (Q), resulting in the hypermodified nucleoside queuosine (7-(((4,5-cis-dihydroxy-2-cyclopenten-1-yl)amino)methyl)-7-deazaguanosine). The protein is Queuine tRNA-ribosyltransferase of Desulforamulus reducens (strain ATCC BAA-1160 / DSM 100696 / MI-1) (Desulfotomaculum reducens).